The following is a 170-amino-acid chain: Lipoprotein signal peptidase (170 aa).

The next 3 membrane-spanning stretches (helical) occupy residues 12–32 (WYWVVVLVFVADQLSKQWVLA), 67–87 (WQRWLFTLVAVGFSTLLTVWL), and 93–113 (GLWRLNLAYTLVIGGALGNLI). Catalysis depends on residues Asp-123 and Asp-141. Residues 133 to 153 (HFPAFNIADSAICVGAGLIIL) traverse the membrane as a helical segment.

Belongs to the peptidase A8 family.

It localises to the cell inner membrane. The enzyme catalyses Release of signal peptides from bacterial membrane prolipoproteins. Hydrolyzes -Xaa-Yaa-Zaa-|-(S,diacylglyceryl)Cys-, in which Xaa is hydrophobic (preferably Leu), and Yaa (Ala or Ser) and Zaa (Gly or Ala) have small, neutral side chains.. It functions in the pathway protein modification; lipoprotein biosynthesis (signal peptide cleavage). Its function is as follows. This protein specifically catalyzes the removal of signal peptides from prolipoproteins. The sequence is that of Lipoprotein signal peptidase from Shewanella loihica (strain ATCC BAA-1088 / PV-4).